The chain runs to 480 residues: MAAPRTPNTARKVLGRLSLPERTFVADALRTETVGGVLLLVATVTALVWANIPALQHSYEAVSHFHFGPSALGLNLSVAHWAADGLLAVFFFVAGIELKRELVAGDLRDPRAAVLPVVAALCGMAVPALVYTLTNLTGHGSTQGWAVPTATDIAFALAVLAVIGTSLPSALRAFLLTLAVVDDLFAILIIAIFFTERINFAALGGAVAGLAVFWLLLRKGVRGWYVYVPLAVVVWALMYNSGVHATIAGVAMGLMLRCTTREGEEHSPGEHIEHLVRPLSAGLAVPLFALFSAGVVVSGGALGDVFTEPETLGVVLGLVVGKTLGIFGSTWLTARFTHAELSEDLEWADIFAVASLAGIGFTVSLLIGELAFAGDTLLTDEVKAAVLTGSLIAALCATVLLKIRNARYRGLCEDEERDEDRDGIPDVYEQDDPAYHLRMADIFERKAAEHRRIAAEKAAAARHGGAEVPGGAGEEDGRPA.

11 helical membrane passes run 34 to 54 (VGGV…NIPA), 76 to 96 (LSVA…VAGI), 113 to 133 (AVLP…VYTL), 144 to 164 (GWAV…AVIG), 174 to 194 (FLLT…AIFF), 197 to 217 (RINF…WLLL), 223 to 243 (GWYV…NSGV), 282 to 302 (GLAV…GGAL), 312 to 332 (LGVV…STWL), 350 to 370 (IFAV…IGEL), and 381 to 401 (EVKA…TVLL). The segment at 454 to 480 (AAEKAAAARHGGAEVPGGAGEEDGRPA) is disordered.

Belongs to the NhaA Na(+)/H(+) (TC 2.A.33) antiporter family.

The protein localises to the cell membrane. The enzyme catalyses Na(+)(in) + 2 H(+)(out) = Na(+)(out) + 2 H(+)(in). Functionally, na(+)/H(+) antiporter that extrudes sodium in exchange for external protons. The polypeptide is Na(+)/H(+) antiporter NhaA (Streptomyces antibioticus).